The chain runs to 382 residues: MVKILPPTASIDWDQISIATNLGLGHVESTYHMSTGRWSDPVFVNDPYLRVHGLAPGLQYAFRTPKGRVSIFRPDKHAKRMSHSTSTISIPNIPESLFLASVELAVTSNSSYVPPHTSRAMLYIRPFAFGSSEMIGLVPPSEYKFCVYVKPVPAYHGLSAQDALILTGFDRAAPHGLGHAKVGGNYAPVIKWSEQAKADGFGMTLHLDSKTRTEIDEFSTSGFLGIKVSDEGAVKVVAPSSPCIIDSTTSDCCLQLARHYGWNVEKRPIKYTELPEFSEVVAVGTAASVVSIRSITLEDSRETVRYLDATTNQGRYARKLSTSLDDIMHCRVEDVFGWCHQVGEAPVEDVPTRKMGSSNKKPAFVDIMTLSCAGQGARFSCH.

Pyridoxal 5'-phosphate is bound at residue R80. Residue K181 is modified to N6-(pyridoxal phosphate)lysine. Position 217 (E217) interacts with pyridoxal 5'-phosphate.

The protein belongs to the class-IV pyridoxal-phosphate-dependent aminotransferase family. It depends on pyridoxal 5'-phosphate as a cofactor.

Its pathway is mycotoxin biosynthesis. Aminotransferase; part of the gene cluster that mediates the biosynthesis of gramillins A and B, bicyclic lipopeptides that induce cell death in maize leaves but not in wheat leaves. The nonribosomal peptide synthetase GRA1 incorporates respectively a glutamic adic (Glu), a leucine (Leu), a serine (Ser), a hydroxyglutamine (HOGln), a 2-amino decanoic acid, and 2 cysteins (CysB and CysA). The biosynthesis of 2-amino decanoic acid incorporated in gramillins could be initiated by a fatty acid synthase composed of the alpha and beta subunits FGSG_00036 and FGSG_11656. The cytochrome P450 monooxygenase FGSG_15680 could hydroxylate the fatty acid chain. Subsequent oxidation to the ketone by the oxidoreductase FGSG_00048 and transamination by aminotransferase FGSG_00049 could form 2-amino-decanoic acid. On the other hand, FGSG_15680 could also be responsible for the HO-modified glutamine at the gamma-position. Whether hydroxylation occurs on the fully assembled product or on the Gln residue prior to assembly into the gramillins requires further proof. The thioredoxin FGSG_00043 could also be required for the disulfide-bond formation between CysA and CysB. The specific involvement of the remaining proteins from the cluster is more difficult to discern, but could have broader regulatory (FGSG_00040 and FGSG_11657) or enzymatic functions (FGSG_00044 and FGSG_00045). The final C-domain of GRA1 does not possess the expected sequence of a termination CT domain, often implicated in macrocyclization and release of a cyclopeptidein fungal NRPs; and the thioesterase FGSG_00047 may act in concert with the terminal C-domain of GRA1 to catalyze the formation of the macrocyclic anhydride and release of the products. This Gibberella zeae (strain ATCC MYA-4620 / CBS 123657 / FGSC 9075 / NRRL 31084 / PH-1) (Wheat head blight fungus) protein is Aminotransferase FGSG_00049.